Reading from the N-terminus, the 293-residue chain is Bisanhydrobacterioruberin hydratase (293 aa).

The next 7 membrane-spanning stretches (helical) occupy residues 36–56, 66–86, 89–109, 134–154, 171–191, 199–219, and 254–274; these read IAVV…EGLL, FVLF…FPLV, RAGL…LVGV, FGLP…VLLL, ATVM…GFWI, GVPW…VLLF, and LFYT…GLLW.

Belongs to the BABR hydratase family.

It is found in the membrane. The enzyme catalyses bacterioruberin = bisanhydrobacterioruberin + 2 H2O. Its pathway is carotenoid biosynthesis. Functionally, involved in the biosynthesis of the acyclic C50 carotenoid bacterioruberin (BR). Catalyzes the reaction that introduces hydroxyl groups to C3'' and C3''' of bisanhydrobacterioruberin (BABR) to generate BR. The polypeptide is Bisanhydrobacterioruberin hydratase (Haloarcula japonica (strain ATCC 49778 / DSM 6131 / JCM 7785 / NBRC 101032 / NCIMB 13157 / TR-1)).